The sequence spans 622 residues: Interleukin-1 receptor-associated kinase-like 2 (622 aa).

A Death domain is found at 13–94; the sequence is LDDLCRNIDT…RAAQIVLSWK (82 aa). The 266-residue stretch at 208–473 folds into the Protein kinase domain; sequence FDQSHRISEG…LPEACEEAWA (266 aa). ATP-binding positions include 214-222, lysine 235, and 335-338; these read ISEGTFADI and KSAN. Disordered regions lie at residues 511 to 532 and 553 to 591; these read RVSE…VDNS and LFTG…ETSW. 2 stretches are compositionally biased toward polar residues: residues 513–523 and 561–590; these read SEATGSSSNTP and QPST…TETS.

Belongs to the protein kinase superfamily. TKL Ser/Thr protein kinase family. Pelle subfamily. As to quaternary structure, interacts with MYD88. IL-1 stimulation leads to the formation of a signaling complex which dissociates from the IL-1 receptor following the binding of PELI1. As to expression, ubiquitously expressed, with a higher expression observed in brain, spleen and liver. Isoform 1 and isoform 2 are considered agonist and isoform 3 and isoform 4 are considered antagonist.

Functionally, binds to the IL-1 type I receptor following IL-1 engagement, triggering intracellular signaling cascades leading to transcriptional up-regulation and mRNA stabilization. The protein is Interleukin-1 receptor-associated kinase-like 2 (Irak2) of Mus musculus (Mouse).